The primary structure comprises 439 residues: Proline--tRNA ligase (439 aa).

Belongs to the class-II aminoacyl-tRNA synthetase family. ProS type 2 subfamily. As to quaternary structure, homodimer.

It localises to the cytoplasm. It catalyses the reaction tRNA(Pro) + L-proline + ATP = L-prolyl-tRNA(Pro) + AMP + diphosphate. Catalyzes the attachment of proline to tRNA(Pro) in a two-step reaction: proline is first activated by ATP to form Pro-AMP and then transferred to the acceptor end of tRNA(Pro). This Rhodopseudomonas palustris (strain BisA53) protein is Proline--tRNA ligase.